A 1389-amino-acid chain; its full sequence is Carboxypeptidase D (1389 aa).

The first 25 residues, 1 to 25 (MAGAARGLLWAALSLCLLPEPLRAA), serve as a signal peptide directing secretion. Residues 26–1308 (HIKKAEAAAA…ENRIFGLPRE (1283 aa)) are Extracellular-facing. The Peptidase M14 1 domain maps to 46-383 (RYLHAAELGQ…ESLLTFIEKV (338 aa)). The interval 95 to 133 (LPEARQDGEKKKKEEEEEEEEEEGEEGGGGALPGRPQVK) is disordered. A compositionally biased stretch (basic and acidic residues) spans 96–108 (PEARQDGEKKKKE). Residues 109 to 120 (EEEEEEEEEGEE) show a composition bias toward acidic residues. Residues histidine 139 and glutamate 142 each coordinate Zn(2+). N-linked (GlcNAc...) asparagine glycosylation is present at asparagine 172. Positions 188–235 (ERAREGDCGGGGGGGGEGGGEPGGRENSRGRDLNRSFPDQFGSAQPDL) are disordered. Residues 195–209 (CGGGGGGGGEGGGEP) are compositionally biased toward gly residues. The segment covering 210–221 (GGRENSRGRDLN) has biased composition (basic and acidic residues). Asparagine 221 carries an N-linked (GlcNAc...) asparagine glycan. Histidine 260 serves as a coordination point for Zn(2+). Glutamate 353 serves as the catalytic Proton donor/acceptor. N-linked (GlcNAc...) asparagine glycosylation is found at asparagine 402, asparagine 413, asparagine 432, and asparagine 472. A Peptidase M14 2 domain is found at 511–801 (RHHHFSDMEI…RSLLQFIKQV (291 aa)). Zn(2+) is bound by residues histidine 573 and glutamate 576. The interval 614–639 (SMNPDGYEKSQEGDRGGTVGRNNSNN) is disordered. Basic and acidic residues predominate over residues 619–628 (GYEKSQEGDR). Asparagine 635 carries an N-linked (GlcNAc...) asparagine glycan. Histidine 680 provides a ligand contact to Zn(2+). The active-site Proton donor/acceptor is glutamate 771. 6 N-linked (GlcNAc...) asparagine glycosylation sites follow: asparagine 820, asparagine 876, asparagine 958, asparagine 981, asparagine 1073, and asparagine 1151. A Peptidase M14 3 domain is found at 935–1220 (RYRPYKDLSE…KSLLSMLVEV (286 aa)). A helical transmembrane segment spans residues 1309 to 1329 (LVVTVAGASMSALVLTACIIW). Residues cysteine 1326, cysteine 1330, and cysteine 1332 are each lipidated (S-palmitoyl cysteine). At 1330–1389 (CVCSIKSNRHKDGFPTLRQHHDDYEDEIRMMSTGSKKSLLSHEFQDETDTEEETLYSSKH) the chain is on the cytoplasmic side. Residues 1367–1389 (SLLSHEFQDETDTEEETLYSSKH) form a disordered region.

Belongs to the peptidase M14 family. In terms of assembly, binds to pre-S, hepatitis B virus large envelope protein, via the carboxypeptidase-like domain. Zn(2+) is required as a cofactor. The N-terminus is blocked. As to expression, expressed in liver, lung, kidney, heart, stomach, pancreas, spleen, gall bladder and intestine, but not in skeletal muscle.

It is found in the cell membrane. It catalyses the reaction Releases C-terminal Arg and Lys from polypeptides.. The sequence is that of Carboxypeptidase D (CPD) from Anas platyrhynchos (Mallard).